Consider the following 259-residue polypeptide: Small ribosomal subunit protein eS4 (259 aa).

An S4 RNA-binding domain is found at 41–100 (LPLSLFLRNRLKYALNYTEAKKILTQRVVRVDGKVRTCHKFPTGFMDVVAIERTNEYFRM).

Belongs to the eukaryotic ribosomal protein eS4 family.

The chain is Small ribosomal subunit protein eS4 (rps-4) from Caenorhabditis elegans.